Here is a 324-residue protein sequence, read N- to C-terminus: Acetyl-coenzyme A carboxylase carboxyl transferase subunit alpha (324 aa).

One can recognise a CoA carboxyltransferase C-terminal domain in the interval Arg41 to Lys291.

This sequence belongs to the AccA family. Acetyl-CoA carboxylase is a heterohexamer composed of biotin carboxyl carrier protein (AccB), biotin carboxylase (AccC) and two subunits each of ACCase subunit alpha (AccA) and ACCase subunit beta (AccD).

It localises to the cytoplasm. It catalyses the reaction N(6)-carboxybiotinyl-L-lysyl-[protein] + acetyl-CoA = N(6)-biotinyl-L-lysyl-[protein] + malonyl-CoA. Its pathway is lipid metabolism; malonyl-CoA biosynthesis; malonyl-CoA from acetyl-CoA: step 1/1. Functionally, component of the acetyl coenzyme A carboxylase (ACC) complex. First, biotin carboxylase catalyzes the carboxylation of biotin on its carrier protein (BCCP) and then the CO(2) group is transferred by the carboxyltransferase to acetyl-CoA to form malonyl-CoA. The sequence is that of Acetyl-coenzyme A carboxylase carboxyl transferase subunit alpha from Chlamydia muridarum (strain MoPn / Nigg).